Consider the following 632-residue polypeptide: Glycerophosphodiester phosphodiesterase domain-containing protein 4 (632 aa).

Over 1–64 (MEETQDSSSS…GSCCCSRKEQ (64 aa)) the chain is Cytoplasmic. A helical transmembrane segment spans residues 65–85 (FFYMCLVIAFILSVLFLFVWV). Over 86–114 (ETSNEYNGFDWVVYLGTGCWFFWSILVLS) the chain is Extracellular. Residues 115–135 (AAGIMVAYTTLLLLLGFLLLW) form a helical membrane-spanning segment. Residues 136–147 (ERIELNLHTSHK) are Cytoplasmic-facing. Residues 148-168 (VFICLVIVLCSFLLAVLSHFW) form a helical membrane-spanning segment. Over 169–180 (KDKWLIAGLSLQ) the chain is Extracellular. The chain crosses the membrane as a helical span at residues 181–201 (IFAPFVHLSLITVMIIISWPL). Topologically, residues 202–240 (SICVARLESEVKVRRYRMADYEQEIQERCNVFQRLRALQ) are cytoplasmic. The helical transmembrane segment at 241 to 261 (IAAGLSFLIILLCLYLMPLGI) threads the bilayer. Topologically, residues 262-542 (YSPCILKKEN…SRPLFFMTPG (281 aa)) are extracellular. The GP-PDE domain maps to 276 to 533 (PTLFGHRGAP…DNIELLNQLS (258 aa)). A divalent metal cation-binding residues include glutamate 308, aspartate 310, and histidine 323. N-linked (GlcNAc...) asparagine glycans are attached at residues asparagine 343, asparagine 349, asparagine 384, and asparagine 473. A helical membrane pass occupies residues 543–563 (FYMFMWLFLDIASAVIIGFVF). At 564–632 (CYNWIKEIKR…QKTEPKTENL (69 aa)) the chain is on the cytoplasmic side. The disordered stretch occupies residues 596–632 (ENNDASQQKPEVAPTSANLAPENMIELQKTEPKTENL). Residues 623–632 (QKTEPKTENL) are compositionally biased toward basic and acidic residues.

Belongs to the glycerophosphoryl diester phosphodiesterase family. Detected in testis, in particular in spermatocytes.

Its subcellular location is the cytoplasm. The protein localises to the membrane. The polypeptide is Glycerophosphodiester phosphodiesterase domain-containing protein 4 (Gdpd4) (Mus musculus (Mouse)).